A 103-amino-acid polypeptide reads, in one-letter code: Large ribosomal subunit protein bL21 (103 aa).

The protein belongs to the bacterial ribosomal protein bL21 family. Part of the 50S ribosomal subunit. Contacts protein L20.

Functionally, this protein binds to 23S rRNA in the presence of protein L20. In Burkholderia ambifaria (strain MC40-6), this protein is Large ribosomal subunit protein bL21.